We begin with the raw amino-acid sequence, 5255 residues long: SCO-spondin (5255 aa).

The N-terminal stretch at 1-18 is a signal peptide; it reads MGIVATVLLWVVTEAARG. The EMI domain occupies 19–111; sequence RWCERTEQVT…ACCAGWSGPH (93 aa). N-linked (GlcNAc...) asparagine glycans are attached at residues Asn97, Asn136, Asn156, and Asn255. The VWFD 1 domain occupies 192–358; that stretch reads ASCTVWAGSR…PDANPELSCS (167 aa). 2 disulfide bridges follow: Cys194/Cys317 and Cys216/Cys357. A TIL 1 domain is found at 453-508; sequence CGHGQRYSDCVSSCPASCMAAGTAEEGHCRDDCASGCECTPGLLLDRGACIPQSAC. Residues 508-601 enclose the VWFC 1 domain; that stretch reads CPCLHRGHIY…CGGHQPLSCL (94 aa). The 172-residue stretch at 546–717 folds into the VWFD 2 domain; that stretch reads AECAVLGDLH…NKYRVSTDCP (172 aa). 3 disulfide bridges follow: Cys548/Cys681, Cys570/Cys716, and Cys592/Cys600. N-linked (GlcNAc...) asparagine glycosylation is present at Asn801. A TIL 2 domain is found at 809 to 868; the sequence is CRGGQVYQECSSPCGRTCADLRLDGASSCPSLDNICVSGCNCPEGPVLDDGGQCVPPGVC. The 59-residue stretch at 868–926 folds into the VWFC 2 domain; the sequence is CPCQHSSQLYPAGSKIRQGCNACMCTAGTWSCTDAPCPDAAFCPGDLVYVFGSCLRTCD. Asn931 and Asn972 each carry an N-linked (GlcNAc...) asparagine glycan. A VWFD 3 domain is found at 998–1168; it reads GTCVATGDPH…NSWRVSLLCP (171 aa). Disulfide bonds link Cys1000-Cys1132, Cys1022-Cys1167, and Cys1043-Cys1050. The TIL 3 domain occupies 1263-1319; the sequence is CDGGQEYSACGPPCPQTCRNLGLELPEHCDTMSCLEGCFCPEGKVLHEGSCIDPAEC. Asn1340 carries N-linked (GlcNAc...) asparagine glycosylation. 6 LDL-receptor class A domains span residues 1362–1398, 1400–1436, 1439–1477, 1479–1515, 1515–1551, and 1555–1593; these read HCPDSEFPCRSGGRCVPGAWLCDNEDDCGDGSDEVCA, HCAPHQHRCADGQCVPWGARCDGLSDCGDGSDERGCP, PCAPPEFRCASGRCIPRAHVCNGELDCGFADDSDEAGCS, SCSVGEFQCAAGRCVPYPHRCNGHDDCGDFSDERGCV, VCPAGHFQCPDAQCLPPAALCDGMQDCGDGTDEAFCP, and TCAPGQLPCPDGSCVSQVKLCDGIWDCRDGWDESSVRCM. Cystine bridges form between Cys1363-Cys1376, Cys1370-Cys1389, Cys1383-Cys1397, Cys1401-Cys1413, Cys1408-Cys1426, Cys1420-Cys1435, Cys1440-Cys1452, Cys1447-Cys1465, Cys1459-Cys1476, Cys1480-Cys1492, Cys1487-Cys1505, Cys1499-Cys1514, Cys1516-Cys1528, Cys1523-Cys1541, Cys1535-Cys1550, Cys1556-Cys1568, Cys1563-Cys1581, and Cys1575-Cys1592. N-linked (GlcNAc...) asparagine glycosylation occurs at Asn1610. LDL-receptor class A domains follow at residues 1616 to 1652, 1654 to 1693, and 1699 to 1734; these read VCGPYEFPCRSGQCVPRGWVCDSEADCPDNSDELGCN, SCVLGHFPCALGAHCIHYDHLCDGIPHCPDHSDESDDNCG, and PCPGHFVCNNRVCVNATRVCDGALDCPQGEDELACE. 3 disulfide bridges follow: Cys1617-Cys1629, Cys1624-Cys1642, and Cys1636-Cys1651. An N-linked (GlcNAc...) asparagine glycan is attached at Asn1652. 6 cysteine pairs are disulfide-bonded: Cys1655-Cys1668, Cys1662-Cys1681, Cys1675-Cys1692, Cys1700-Cys1711, Cys1706-Cys1724, and Cys1718-Cys1733. N-linked (GlcNAc...) asparagine glycosylation is present at Asn1713. N-linked (GlcNAc...) asparagine glycosylation is present at Asn1743. The LDL-receptor class A 10 domain occupies 1748 to 1790; that stretch reads PCAEYSCRDGDCITFKQVCNGLPDCRDGDMASGWLPSDEWDCG. 6 disulfide bridges follow: Cys1749–Cys1759, Cys1754–Cys1772, Cys1766–Cys1789, Cys1801–Cys1837, Cys1805–Cys1842, and Cys1816–Cys1827. TSP type-1 domains are found at residues 1789-1843 and 1845-1903; these read CGQW…TACP and DGAW…DGCP. Asn1856 is a glycosylation site (N-linked (GlcNAc...) asparagine). Cystine bridges form between Cys1857–Cys1897, Cys1861–Cys1902, and Cys1871–Cys1881. The TIL 4 domain maps to 1907–1961; the sequence is CPGGLQPRPCAPCPASCADLASRAPCRREQCTPGCWCAEGLVLDGERGCVRPREC. EGF-like domains lie at 1919–1956 and 1957–1983; these read CPASCADLASRAPCRREQCTPGCWCAEGLVLDGERGCV and RPRECRCEVDGLRYWPGQRMKLNCRLC. The VWFC 3 domain maps to 1961-2019; that stretch reads CRCEVDGLRYWPGQRMKLNCRLCTCLDGQPRRCRHNPACSVSCSWSAWSPWGECLGPCG. Positions 2002–2058 constitute a TSP type-1 3 domain; the sequence is SCSWSAWSPWGECLGPCGVQSIQWSFRSPSHPGKHGTNRQCRGIYRKARRCQTEPCQ. 3 cysteine pairs are disulfide-bonded: Cys2003–Cys2042, Cys2014–Cys2018, and Cys2052–Cys2057. The 63-residue stretch at 2058-2120 folds into the VWFC 4 domain; it reads QECEHQGRSR…GKGDSCCFCA (63 aa). N-linked (GlcNAc...) asparagine glycans are attached at residues Asn2125 and Asn2230. 4 disulfides stabilise this stretch: Cys2162/Cys2310, Cys2328/Cys2339, Cys2335/Cys2352, and Cys2346/Cys2361. In terms of domain architecture, F5/8 type C spans 2162-2310; sequence CYSPLGIASL…IFLRAELLGC (149 aa). The LDL-receptor class A 11 domain maps to 2327 to 2362; sequence PCGTGEFWCGVSCVTASRRCDGATDCPGGADEAGCE. The segment at 2352 to 2373 is disordered; that stretch reads CPGGADEAGCEPPSSTTLPTHP. Positions 2364–2373 are enriched in polar residues; it reads PSSTTLPTHP. LDL-receptor class A domains follow at residues 2481 to 2517 and 2538 to 2574; these read LCPPDQFLCDALGCVDAAMVCDGQQDCLDGSDEAHCG and TCSPKQFSCGTGECLALEKRCDLSRDCADGSDESSCA. 12 cysteine pairs are disulfide-bonded: Cys2482-Cys2494, Cys2489-Cys2507, Cys2501-Cys2516, Cys2539-Cys2551, Cys2546-Cys2564, Cys2558-Cys2573, Cys2576-Cys2612, Cys2587-Cys2591, Cys2622-Cys2627, Cys2642-Cys2679, Cys2646-Cys2684, and Cys2657-Cys2669. TSP type-1 domains are found at residues 2575 to 2628 and 2630 to 2685; these read DCIL…RACP and PGAW…QPCG. The region spanning 2708–2750 is the TIL 5 domain; that stretch reads PPCPQVCGDLSATSSCQSPCQEGCRCPPGLFLQEGTCVNASQC. An N-linked (GlcNAc...) asparagine glycan is attached at Asn2746. TSP type-1 domains lie at 2790–2844, 2849–2903, and 2905–2958; these read ACAW…TPCA, SSGW…APCP, and AGVW…RPCG. Cystine bridges form between Cys2791-Cys2829, Cys2802-Cys2806, Cys2839-Cys2843, Cys2861-Cys2897, Cys2865-Cys2902, Cys2881-Cys2887, Cys2917-Cys2952, Cys2921-Cys2957, and Cys2932-Cys2942. The 50-residue stretch at 2971-3020 folds into the TIL 6 domain; the sequence is EECRHSEGRCPWICQDLGAGVACTAQCQPGCHCPAGLLLQNGTCVPPSHC. N-linked (GlcNAc...) asparagine glycosylation is found at Asn3011, Asn3042, and Asn3065. Residues 3020–3077 enclose the VWFC 5 domain; the sequence is CLCHHRGHLYQPGDINALDTCNNCTCVTGQMVCSTETCPVPCTWSNWTAWSTCSHSCD. TSP type-1 domains are found at residues 3060–3115 and 3117–3158; these read PCTW…QPCR and VAPW…APCP. Disulfide bonds link Cys3061/Cys3099, Cys3072/Cys3076, and Cys3109/Cys3114. Asn3136 carries an N-linked (GlcNAc...) asparagine glycan. One can recognise a TIL 7 domain in the interval 3165 to 3217; the sequence is CPPGKQWQACAQGAASCAELSAAPPADGSCHPGCYCPPGALLLNNECVAEAAC. In terms of domain architecture, VWFC 6 spans 3217–3275; sequence CPCAVDGVLYQPGDVVPQGCHNCSCIAGRVTNCSQEDCGDVDGPWTPWTPWSECSASCG. Asn3238 and Asn3248 each carry an N-linked (GlcNAc...) asparagine glycan. The TSP type-1 11 domain maps to 3258-3309; the sequence is DGPWTPWTPWSECSASCGPGRQRRYRFCSAHPGVPCAEPQPQERPCARQPCH. Disulfide bonds link Cys3270–Cys3303, Cys3274–Cys3308, and Cys3285–Cys3293. 3 N-linked (GlcNAc...) asparagine glycosylation sites follow: Asn3350, Asn3366, and Asn3392. TSP type-1 domains are found at residues 3410–3475 and 3477–3532; these read PGAW…PPCP and DGAW…SSCP. 6 cysteine pairs are disulfide-bonded: Cys3422-Cys3468, Cys3426-Cys3474, Cys3437-Cys3449, Cys3489-Cys3524, Cys3492-Cys3531, and Cys3502-Cys3514. In terms of domain architecture, TIL 8 spans 3534 to 3589; sequence CAGGLVAFTCGKPCPHSCEDLREDTACMATPRCLPACACPHGQLLQDGDCVPPELC. Residues Asn3598 and Asn3625 are each glycosylated (N-linked (GlcNAc...) asparagine). 2 consecutive TSP type-1 domains span residues 3644 to 3700 and 3702 to 3751; these read DGGW…EGCP and EEPW…HVCR. 6 disulfides stabilise this stretch: Cys3656-Cys3693, Cys3660-Cys3699, Cys3671-Cys3683, Cys3714-Cys3745, Cys3718-Cys3750, and Cys3729-Cys3735. Residues Asn3823 and Asn3869 are each glycosylated (N-linked (GlcNAc...) asparagine). 4 consecutive TSP type-1 domains span residues 3878-3934, 3951-4004, 4018-4074, and 4076-4131; these read DGGF…PECP, EEGF…PLCS, NCSW…QACK, and DGAW…QPCD. 6 disulfides stabilise this stretch: Cys3890–Cys3928, Cys3894–Cys3933, Cys3906–Cys3918, Cys3963–Cys3998, Cys3967–Cys4003, and Cys3982–Cys3988. The interval 3932–3951 is disordered; it reads ECPAVPTTEPGPGVAGAEEE. The N-linked (GlcNAc...) asparagine glycan is linked to Asn4018. 6 disulfides stabilise this stretch: Cys4019-Cys4055, Cys4030-Cys4034, Cys4068-Cys4073, Cys4088-Cys4125, Cys4092-Cys4130, and Cys4103-Cys4115. In terms of domain architecture, TIL 9 spans 4134-4189; the sequence is CPPGMALVTCANHCPRHCGDLQEGIVCREEEHCEPGCRCPNGTLEQDGGCVPLAHC. 2 N-linked (GlcNAc...) asparagine glycosylation sites follow: Asn4174 and Asn4211. TSP type-1 domains follow at residues 4230–4282, 4322–4384, and 4386–4433; these read RCPW…GPCP, GAEH…RPCP, and ECSW…SGCS. Cystine bridges form between Cys4231/Cys4266, Cys4242/Cys4246, and Cys4276/Cys4281. N-linked (GlcNAc...) asparagine glycosylation is present at Asn4362. Cystine bridges form between Cys4387–Cys4417, Cys4398–Cys4400, and Cys4427–Cys4432. An N-linked (GlcNAc...) asparagine glycan is attached at Asn4428. The TIL 10 domain maps to 4437 to 4492; the sequence is CEPPFEFQPCSPPCARLCSTLQHPELCPAQSHCLPGCFCPQGLLEQRSACVPPEQC. Asn4498 carries N-linked (GlcNAc...) asparagine glycosylation. 2 consecutive TSP type-1 domains span residues 4537–4608 and 4610–4662; these read LPLS…DICQ and LCLW…AVCP. Cystine bridges form between Cys4548/Cys4601, Cys4551/Cys4607, Cys4575/Cys4591, Cys4611/Cys4646, Cys4622/Cys4626, and Cys4656/Cys4661. The TIL 11 domain occupies 4675–4722; that stretch reads TTCANSCPRACADLWQHVECVQGGCKPGCRCPQGQLLQDGLCVPTAQC. 3 N-linked (GlcNAc...) asparagine glycosylation sites follow: Asn4730, Asn4747, and Asn4752. TSP type-1 domains are found at residues 4762 to 4815 and 4817 to 4869; these read CPSY…QPCP and GCQL…HNCT. 6 disulfide bridges follow: Cys4774-Cys4809, Cys4778-Cys4814, Cys4789-Cys4798, Cys4818-Cys4852, Cys4829-Cys4833, and Cys4863-Cys4868. Asn4867 carries N-linked (GlcNAc...) asparagine glycosylation. The 55-residue stretch at 4872 to 4926 folds into the TIL 12 domain; sequence CPRSQVHRECANACPHACADLRPQTQCLPQPCQPGCACPPGQVLQDGACVPPEEC. 2 N-linked (GlcNAc...) asparagine glycosylation sites follow: Asn4939 and Asn4970. Residues 4979 to 5033 enclose the TSP type-1 27 domain; that stretch reads DCLWSPWSPWSPCSVTCGMGERLSHRHPLRQRLYEGAECLGPPVRRAACHLPDCA. 3 disulfide bridges follow: Cys4980-Cys5017, Cys4991-Cys4995, and Cys5027-Cys5032. Residues Asn5081, Asn5122, and Asn5169 are each glycosylated (N-linked (GlcNAc...) asparagine). One can recognise a VWFC 7 domain in the interval 5092–5150; sequence CECLHQGQLHQPGSEWQEQCARCRCVDGKANCTDGCTPLSCPEGEVKVREPGRCCPVCR. Disulfide bonds link Cys5161–Cys5209, Cys5175–Cys5226, Cys5185–Cys5242, and Cys5189–Cys5244. The CTCK domain occupies 5161 to 5248; sequence CRRFTELRNI…IHSCECSSCQ (88 aa).

Belongs to the thrombospondin family.

The protein localises to the secreted. Its subcellular location is the extracellular space. In terms of biological role, involved in the modulation of neuronal aggregation. May be involved in developmental events during the formation of the central nervous system. This is SCO-spondin (SSPO) from Gallus gallus (Chicken).